The following is a 426-amino-acid chain: D-tagatose-1,6-bisphosphate aldolase subunit KbaZ (426 aa).

The protein belongs to the GatZ/KbaZ family. KbaZ subfamily. In terms of assembly, forms a complex with KbaY.

It functions in the pathway carbohydrate metabolism; D-tagatose 6-phosphate degradation; D-glyceraldehyde 3-phosphate and glycerone phosphate from D-tagatose 6-phosphate: step 2/2. In terms of biological role, component of the tagatose-1,6-bisphosphate aldolase KbaYZ that is required for full activity and stability of the Y subunit. Could have a chaperone-like function for the proper and stable folding of KbaY. When expressed alone, KbaZ does not show any aldolase activity. The polypeptide is D-tagatose-1,6-bisphosphate aldolase subunit KbaZ (Escherichia coli (strain SMS-3-5 / SECEC)).